A 362-amino-acid chain; its full sequence is tRNA-specific 2-thiouridylase MnmA (362 aa).

ATP-binding positions include 8–15 (AMSGGVDS) and methionine 35. The segment at 95-97 (NPD) is interaction with target base in tRNA. The Nucleophile role is filled by cysteine 100. Cysteine 100 and cysteine 196 form a disulfide bridge. Residue glycine 124 coordinates ATP. The interval 146-148 (KDQ) is interaction with tRNA. The active-site Cysteine persulfide intermediate is cysteine 196. The tract at residues 303–304 (RY) is interaction with tRNA.

The protein belongs to the MnmA/TRMU family.

The protein localises to the cytoplasm. The catalysed reaction is S-sulfanyl-L-cysteinyl-[protein] + uridine(34) in tRNA + AH2 + ATP = 2-thiouridine(34) in tRNA + L-cysteinyl-[protein] + A + AMP + diphosphate + H(+). Its function is as follows. Catalyzes the 2-thiolation of uridine at the wobble position (U34) of tRNA, leading to the formation of s(2)U34. This chain is tRNA-specific 2-thiouridylase MnmA, found in Chlamydia abortus (strain DSM 27085 / S26/3) (Chlamydophila abortus).